The sequence spans 159 residues: uncharacterized protein (159 aa).

Positions 4–153 constitute an N-acetyltransferase domain; that stretch reads IKTDDLTHPA…HSRFLSLTLC (150 aa).

The protein belongs to the acetyltransferase family.

This is an uncharacterized protein from Escherichia coli (strain K12).